A 425-amino-acid chain; its full sequence is Riboflavin biosynthesis protein RibBA (425 aa).

The DHBP synthase stretch occupies residues methionine 1–lysine 204. D-ribulose 5-phosphate contacts are provided by residues arginine 28–glutamate 29, aspartate 33, arginine 141–threonine 145, and glutamate 165. Glutamate 29 contributes to the Mg(2+) binding site. Histidine 144 is a Mg(2+) binding site. Positions histidine 205–leucine 425 are GTP cyclohydrolase II. Arginine 259–glutamate 263 is a GTP binding site. Zn(2+) is bound by residues cysteine 264, cysteine 275, and cysteine 277. GTP is bound by residues glutamine 280, glutamate 303 to arginine 305, and threonine 325. Residue aspartate 337 is the Proton acceptor; for GTP cyclohydrolase activity of the active site. Arginine 339 (nucleophile; for GTP cyclohydrolase activity) is an active-site residue. GTP contacts are provided by threonine 360 and lysine 365.

It in the N-terminal section; belongs to the DHBP synthase family. The protein in the C-terminal section; belongs to the GTP cyclohydrolase II family. Requires Mg(2+) as cofactor. Mn(2+) serves as cofactor. Zn(2+) is required as a cofactor.

The catalysed reaction is D-ribulose 5-phosphate = (2S)-2-hydroxy-3-oxobutyl phosphate + formate + H(+). It carries out the reaction GTP + 4 H2O = 2,5-diamino-6-hydroxy-4-(5-phosphoribosylamino)-pyrimidine + formate + 2 phosphate + 3 H(+). It functions in the pathway cofactor biosynthesis; riboflavin biosynthesis; 2-hydroxy-3-oxobutyl phosphate from D-ribulose 5-phosphate: step 1/1. Its pathway is cofactor biosynthesis; riboflavin biosynthesis; 5-amino-6-(D-ribitylamino)uracil from GTP: step 1/4. Functionally, catalyzes the conversion of D-ribulose 5-phosphate to formate and 3,4-dihydroxy-2-butanone 4-phosphate. Its function is as follows. Catalyzes the conversion of GTP to 2,5-diamino-6-ribosylamino-4(3H)-pyrimidinone 5'-phosphate (DARP), formate and pyrophosphate. The protein is Riboflavin biosynthesis protein RibBA of Mycobacterium bovis (strain ATCC BAA-935 / AF2122/97).